The sequence spans 103 residues: Large ribosomal subunit protein bL21 (103 aa).

The protein belongs to the bacterial ribosomal protein bL21 family. As to quaternary structure, part of the 50S ribosomal subunit. Contacts protein L20.

This protein binds to 23S rRNA in the presence of protein L20. The protein is Large ribosomal subunit protein bL21 of Rhodococcus jostii (strain RHA1).